The following is a 249-amino-acid chain: uncharacterized protein (249 aa).

Its subcellular location is the cytoplasm. The protein localises to the nucleus. This is an uncharacterized protein from Schizosaccharomyces pombe (strain 972 / ATCC 24843) (Fission yeast).